We begin with the raw amino-acid sequence, 4473 residues long: DGHNLISLLEVLSGDSLPREKGRMRFHKLQNVQIALDYLRHRQVKLVNIRNDDIADGNPKLTLGLIWTIILHFQISDIQVSGQSEDMTAKEKLLLWSQRMVEGYQGLRCDNFTTSWRDGRLFNAIIHRHKPMLIDMNKVYRQTNLENLDQAFSVAERDLGVTRLLDPEDVDVPQPDEKSIITYVSSLYDAMPRVPGAQNGVRANELQLRWQEYRELVLLLLQWIRHHTAAFEERKFPSSFEEIEILWCQFLKFKETELPAKEADKSRSKGIYQSLEGAVQAGQLQIPPGFHPLDVEKEWGKLHVAILEREKQLRGEFERLECLQRIVSKLQMEAGLCEEQLNQADSLLQSDIRLLASGKVAQRAGEVERDLDKADGMIRLLFNDVQTLKDGRHPQGEQMYRRVYRLHERLVAIRTEYNLRLKAGVAAPVTQVTVQSTQRRPELEDSTLRYLQDLLAWVEENQRRIDSAEWGVDLPSVEAQLGSHRGMHQSIEEFRAKIERARNDESQLSPATRGAYRECLGRLDLQYAKLLNSSKARLRSLESLHGFVAAATKELMWLNEKEEEEVGFDWSDRNTNMAAKKESYSALMRELEMKEKKIKETQNTGDRLLREDHHARPTVESFQAALQTQWSWMLQLCCCIEAHLKENTAYFQFFSDVREAEEQLQKLQETMRREYSCDRSITVTRLEDLLQDAQDEREQLNEYKGHLSGLAKRAKAIVQLKPRNPAHPVRGHVPLMAVCDYKQVEVTVHKGDQCQLVGPAQPSHWKVLRGPSSEAAVPSVCFLVPPPNQEAQEAVARLEAQHQALVTLWHQLHVDMKSLLAWQNLSRDIQLIRSWSLVTFRTLKPEEQRQALRNLELHYQAFLRDSQDAGGFGPEDRLVAEREYGSCSRHYQQLLQSLEQGEQEESRCQRCISELKDIRLQLEACETRTVHRLRLPLDKEPARECAQRIAEQQKAQAEVEGLGKGVARLSAEAEKVLALPEPSPAAPTLRSELELTLGKLEQVRSLSAIYLEKLKTISLVIRSTQGAEEVLKAHEEQLKEAQAVPATLQELEATKASLKKLRAQAEAQQPVFDTLRDELRGAQEVGERLQQRHGERDVEVERWRERVNQLLERWQAVLAQIDVRQRELEQLGRQLRYYRESADPLSSWLQDAKRRQEQIQAVPIPNSQAAREQLRQEKALLEEIERHGEKVEECQKFAKQYINAIKDYELQLVTYKAQLEPVASPAKKPKVQSGSESVIQEYVDLRTRYSELTTLTSQYIKFISETLRRMEEEERLAEQQRAEERERLAEGEAALEKQRQLAEAHAQAKAQAELEAQELQRRMQEEVARREEAAVNAQQQKRSIQEELQHLRQSSEAEIQAKAQQVEAAERSRMRIEEEIRVVRLQLETTERQRGGAEGELQALRARAEEAEAQKRQAQEEAERLRRQVQDESQRKRQAEAELALRVKAQAEAAQEKQRALQALEELRLQAEEAERRLRQAQAERARQVQVALETAQRSAEVELQSKRASFAEKTAQLERTLQEEHVTVTQLREKAERRAQQQAEAERAREEAERELERWQLKANEALRLRLQAEEVAQQRSLAQADAEKQKEEAEREARRRGKAEEQAVRQRELAEQELEKQRQLAEGTAQQRLAAEQELIRLRAETEQGEQQRQLLEEELARLQREATAATHKRQELEAELAKVRAEMEVLLASKARAEEESRSTSEKSKQRLEAEADRFRELAEEAARLRALAEEAKRQRQLAEEDAARQRAEAERVLTEKLAAISEATRLKTEAEIALKEKEAENERLRRLAEDEAFQRRRLEEQAALHKADIEERLAQLRKASESELERQKGLVEDTLRQRRQVEEEILALKVSFEKAAAGKAELELELGRIRSSAEDTMRSKEQAEQEAARQRQLAAEEEQRRREAEERVQKSLAAEEEAARQRKAALEEVERLKAKVEEARRLRERAEQESARQLQLAQEAAQKRLQAEEKAHAFVVQQREEELQQTLQQEQSMLERLRGEAEAARRAAEEAEEAREQAEREAAQSRKQVEEAERLKQSAEEQAQARAQAQAAAEKLRKEAEQEAARRAQAEQAALKQKQAADAEMEKHKKFAEQTLRQKAQVEQELTTLRLQLEETDHQKSILDEELQRLKAEVTEAARQRSQVEEELFSVRVQMEELGKLKARIEAENRALILRDKDNTQRFLEEEAEKMKQVAEEAARLSVAAQEAARLRQLAEEDLAQQRALAEKMLKEKMQAVQEATRLKAEAELLQQQKELAQEQARRLQEDKEQMAQQLVEETQGFQRTLEVERQRQLEMSAEAERLKLRMAEMSRAQARAEEDAQRFRKQAEEIGEKLHRTELATQEKVTLVQTLEIQRQQSDHDAERLREAIAELEREKEKLKQEAKLLQLKSEEMQTVQQEQILQETQALQKSFLSEKDSLLQRERFIEQEKAKLEQLFQDEVAKAQQLREEQQRQQRQMEQEKQELVASMEEARRRQCEAEEAVRRKQEELQHLELQRQQQEKLLAEENQRLRERLQRLEEEHRAALAHSEEIAATQAAAAKALPNGRDALDGPSMEVEPEHAFEGLRQKVPALQLREAGILSAEELQRLEQGHTTVAELSQREDVRQYLQGRSSIAGLLLKPTDEKLSVYTALQRQLLSPGTALILLEAQAASGFLLDPVRNRRLTVNEPVKEGVVGPELHHKLLSAERAVTGYKDPYTGEQISLFQAMKKDLLVRDHAIRLLEAQIATGGIIDTVHSHRVPVDVAYQRGYFDEEMSRILADPGDDTKGFFDPNTHENLTYLQLLERCVEDPETGLHLLPLTDKAAKGGELVYTDTEARDVFEKATVSAPFGKFQGKTVTIWEIINSEYFTAEQRRDLLRQFRTGRITVEKIIKIVITVVEEQERKGQLCFEGLRALVPAAELLESGVISHELYQQLQRGERSVREVAEADSVRRALRGASVIAGVWLEEAGQKLSIYEALKKDLLQPDVAVALLEAQAGTGHIIDPATSARLTVDEAVRAGLVGPELHEKLLSAEKAVTGYRDPYSGQSVSLFQALKKGLIPREQGLRLLDAQLSTGGMVDPSKSHRVPLDVAYARGYLDKETNRALTSPRNDARVYLDPSSQEPATYSQLQQRCRADQLTGLSLLPVSEKAVRARQEEVYSELQARETLEKARVEVPVGGFKGRTMTVWELISSEYFTQEQRQELLRQFRTGKVTVEKVIRIVITIVEEVETQRQERLSFSGLRAPVPASELLAAKILSRAQFDQLKEGKTSVKDLSEVGSVRTLLQGSGCLAGVYLEDSKEKVTIYEAMRRGLLRPSTATLLLEAQAATGFLVDPVRNQRLYVHEAVKAGVVGPELHEKLLSAEKAVTGYKDPYSGTTISLFQAMKKGLVLREHAIRLLEAQIATGGIIDPVHSHRLPVDVAYQRGYFDEEMSRILADPSDDTKGFFDPNTHENLTYLQLLERCVEDPETGLRLLPLKGAEKTEVVETTQVYTEEETRRAFEETQIDIPGGGSHGGSSMSLWEVMQSDMIPEDQRARLMADFQAGRVTKERMIIIIIEIIEKTEIIRQQNLASYDYVRRRLTAEDLYEARIISLETYNLFREGTKSLREVLEMESAWRYLYGTGSVAGVYLPGSRQTLTIYQALKKGLLSAEVARLLLEAQAATGFLLDPVKGERLTVDEAVRKGLVGPELHDRLLSAERAVTGYRDPYTEQTISLFQAMKKELIPAEEALRLLDAQLATGGIVDPRLGFHLPLEVAYQRGYLNKDTHDQLSEPSEVRSYVDPSTDERLSYTQLLKRCRRDDGSGQMLLPLSDARRLTFRGLRKQITVEELVRSQVMDEATALQLQEGLTSIEEVTKTLQKFLEGTSCIAGVFVDATKERLSVYQAMKKGIIRPGTAFELLEAQAATGYVIDPIKGLKLTVEEAVRMGIVGPEFKDRLLSAERAVTGYKDPYSGKLISLFQAMKKGLILKDHGIRLLEAQIATGGIIDPEESHRLPVEVAYKRGLFDEEMNEILTDPSDDTKGFFDPNTEENLTYLQLMERCITDPQTGLRLLPLKEKKRERKTSSKSSVRKRRVVIVDPETSKEMSVYEAYRKGLIDHQTYLELSEQECEWEEITISSSDGVVKSMIIDRRSGRQYDIDDAITENLIDRSALDQYRAGTLSITEFADMLSGNAGGFRSRSSSVGSSSSYPISPAVSRTQLASWSDPTEETGPVAGILDTETLEKVSITEAMHRNLVDNITGQRLLEAQACTGGIIDPSTGERFPVTEAVNKGLVDKIMVDRINLAQKAFCGFEDPRTKTKMSAAQALKKGWLYYEAGQRFLEVQYLTGGLIEPDTPGRVPLDEALQRGTVDARTAQKLRDVSAYSKYLTCPKTKLKISYKDALDRSMVEEGTGLRLLEAAAQSSKGYYSPYSVSGSGSTTGSRTGSRTGSRAGSRRGSFDATGSGFSMTFSSSSYSSSGYGRRYASGPPASLGGPESAVA.

Calponin-homology (CH) domains are found at residues 1 to 74 and 87 to 192; these read DGHN…LHFQ and MTAK…DAMP. The interval 1–192 is actin-binding; it reads DGHNLISLLE…YVSSLYDAMP (192 aa). A globular 1 region spans residues 1-1259; that stretch reads DGHNLISLLE…SELTTLTSQY (1259 aa). One copy of the Spectrin 1 repeat lies at 449-508; that stretch reads RYLQDLLAWVEENQRRIDSAEWGVDLPSVEAQLGSHRGMHQSIEEFRAKIERARNDESQL. Serine 509 carries the post-translational modification Phosphoserine. Spectrin repeat units follow at residues 529–613 and 626–719; these read KLLN…REDH and LQTQ…AIVQ. Threonine 604 carries the post-translational modification Phosphothreonine. The SH3 domain maps to 730 to 787; the sequence is RGHVPLMAVCDYKQVEVTVHKGDQCQLVGPAQPSHWKVLRGPSSEAAVPSVCFLVPPP. Serine 836 carries the phosphoserine modification. A Spectrin 4 repeat occupies 1104 to 1204; it reads RERVNQLLER…QKFAKQYINA (101 aa). Position 1224 is a phosphoserine (serine 1224). Residues 1258 to 2548 are a coiled coil; it reads QYIKFISETL…EEIAATQAAA (1291 aa). The tract at residues 1260 to 2544 is central fibrous rod domain; it reads IKFISETLRR…LAHSEEIAAT (1285 aa). 2 disordered regions span residues 1274 to 1293 and 1407 to 1434; these read ERLA…EGEA and RAEE…DESQ. A Phosphoserine modification is found at serine 1510. Position 1514 is an N6-acetyllysine (lysine 1514). Disordered stretches follow at residues 1529-1550, 1582-1616, 1881-1929, 1950-1971, and 2003-2098; these read VTQL…ERAR, SLAQ…RELA, AEDT…AARQ, LRER…AAQK, and ERLR…KHKK. Basic and acidic residues-rich tracts occupy residues 1587–1616, 1881–1897, and 1905–1917; these read DAEK…RELA, AEDT…EAAR, and EEQR…ERVQ. The span at 1959-1968 shows a compositional bias: low complexity; sequence ARQLQLAQEA. Over residues 2003-2047 the composition is skewed to basic and acidic residues; sequence ERLRGEAEAARRAAEEAEEAREQAEREAAQSRKQVEEAERLKQSA. The segment covering 2048 to 2061 has biased composition (low complexity); the sequence is EEQAQARAQAQAAA. Residues 2062-2077 show a composition bias toward basic and acidic residues; the sequence is EKLRKEAEQEAARRAQ. Serine 2420 is modified (phosphoserine). Lysine 2425 is modified (N6-acetyllysine). The tract at residues 2457-2476 is disordered; it reads REEQQRQQRQMEQEKQELVA. The globular 2 stretch occupies residues 2545–4473; that stretch reads QAAAAKALPN…SLGGPESAVA (1929 aa). 2 positions are modified to phosphoserine: serine 2563 and serine 2591. 5 Plectin repeats span residues 2615–2652, 2653–2690, 2691–2728, 2729–2766, and 2770–2804; these read RQYL…PGTA, LILL…PELH, HKLL…RDHA, IRLL…EEMS, and ADPG…PETG. Residue threonine 2675 is modified to Phosphothreonine. Phosphotyrosine is present on tyrosine 2822. 2 positions are modified to N6-acetyllysine: lysine 2842 and lysine 2880. 5 Plectin repeats span residues 2905-2942, 2943-2980, 2981-3018, 3019-3056, and 3057-3094; these read ALVP…ADSV, RRAL…PDVA, VALL…PELH, EKLL…REQG, and LRLL…KETN. Tyrosine 3151 is subject to Phosphotyrosine. Lysine 3209 bears the N6-acetyllysine mark. Plectin repeat units follow at residues 3274–3311, 3312–3349, 3350–3387, 3388–3425, and 3429–3463; these read RTLL…PSTA, TLLL…PELH, EKLL…REHA, IRLL…EEMS, and ADPS…PETG. Phosphothreonine is present on threonine 3574. Tyrosine 3579 carries the phosphotyrosine modification. 6 Plectin repeats span residues 3609 to 3646, 3647 to 3684, 3685 to 3722, 3723 to 3760, 3764 to 3797, and 3800 to 3834; these read WRYL…AEVA, RLLL…PELH, DRLL…AEEA, LRLL…KDTH, SEPS…DGSG, and LLPL…EATA. Position 3819 is a phosphothreonine (threonine 3819). A Phosphoserine modification is found at serine 3843. Plectin repeat units lie at residues 3852 to 3889, 3890 to 3927, 3928 to 3965, 3966 to 4003, 4007 to 4041, and 4043 to 4094; these read QKFL…PGTA, FELL…PEFK, DRLL…KDHG, IRLL…EEMN, TDPS…PQTG, and RLLP…HQTY. Residues 4039-4089 form a binding to intermediate filaments region; it reads QTGLRLLPLKEKKRERKTSSKSSVRKRRVVIVDPETSKEMSVYEAYRKGLI. Serine 4171, serine 4173, serine 4174, serine 4175, serine 4178, serine 4179, serine 4180, and serine 4181 each carry phosphoserine. The residue at position 4182 (tyrosine 4182) is a Phosphotyrosine. Phosphoserine occurs at positions 4185, 4189, and 4195. 5 Plectin repeats span residues 4197-4234, 4235-4272, 4273-4310, 4311-4348, and 4349-4386; these read SDPT…NITG, QRLL…KIMV, DRIN…YEAG, QRFL…ARTA, and QKLR…EGTG. The residue at position 4200 (threonine 4200) is a Phosphothreonine. Threonine 4328 carries the post-translational modification Phosphothreonine; by CDK1. Residues serine 4396 and serine 4402 each carry the phosphoserine modification. The span at 4400–4460 shows a compositional bias: low complexity; the sequence is YYSPYSVSGS…SGYGRRYASG (61 aa). Residues 4400–4473 are disordered; sequence YYSPYSVSGS…SLGGPESAVA (74 aa). Tyrosine 4404 bears the Phosphotyrosine mark. Phosphoserine occurs at positions 4405, 4407, and 4411. Position 4412 is a phosphothreonine (threonine 4412). The 4 X 4 AA tandem repeats of G-S-R-X stretch occupies residues 4414-4429; it reads GSRTGSRTGSRAGSRR. Serine 4415 bears the Phosphoserine mark. 2 positions are modified to omega-N-methylarginine: arginine 4416 and arginine 4429. A phosphoserine mark is found at serine 4431 and serine 4464.

It belongs to the plakin or cytolinker family. As to quaternary structure, homodimer or homotetramer. Interacts (via actin-binding domain) with SYNE3. Interacts (via calponin-homology (CH) 1 domain) with VIM (via rod region). Interacts (via N-terminus) with DST isoform 2 (via N-terminus). Interacts with FER. Interacts with TOR1A. Interacts with ANK3. Identified in complexes that contain VIM, EZR, AHNAK, BFSP1, BFSP2, ANK2, PLEC, PRX and spectrin. Post-translationally, phosphorylated by CDK1; regulates dissociation from intermediate filaments during mitosis.

The protein resides in the cytoplasm. It localises to the cytoskeleton. It is found in the cell junction. The protein localises to the hemidesmosome. Its subcellular location is the cell projection. The protein resides in the podosome. In terms of biological role, interlinks intermediate filaments with microtubules and microfilaments and anchors intermediate filaments to desmosomes or hemidesmosomes. May be involved not only in the cross-linking and stabilization of cytoskeletal intermediate filaments network, but also in the regulation of their dynamics. The polypeptide is Plectin (PLEC) (Cricetulus griseus (Chinese hamster)).